We begin with the raw amino-acid sequence, 266 residues long: Exosome complex component Rrp42 (266 aa).

This sequence belongs to the RNase PH family. Rrp42 subfamily. Component of the archaeal exosome complex. Forms a hexameric ring-like arrangement composed of 3 Rrp41-Rrp42 heterodimers. The hexameric ring associates with a trimer of Rrp4 and/or Csl4 subunits.

It localises to the cytoplasm. In terms of biological role, non-catalytic component of the exosome, which is a complex involved in RNA degradation. Contributes to the structuring of the Rrp41 active site. The sequence is that of Exosome complex component Rrp42 from Methanosarcina mazei (strain ATCC BAA-159 / DSM 3647 / Goe1 / Go1 / JCM 11833 / OCM 88) (Methanosarcina frisia).